The chain runs to 160 residues: Cytochrome c-type biogenesis protein CcmE (160 aa).

Residues 1–7 (MTRKQRR) lie on the Cytoplasmic side of the membrane. Residues 8 to 28 (ATFIAVSLGILALAVGLVLYA) traverse the membrane as a helical; Signal-anchor for type II membrane protein segment. Residues 29-160 (MRDSIVYFYS…SETYGQGSYP (132 aa)) lie on the Periplasmic side of the membrane. Heme contacts are provided by His122 and Tyr126. Positions 141-160 (WQGEGAEAPHSETYGQGSYP) are disordered.

It belongs to the CcmE/CycJ family.

Its subcellular location is the cell inner membrane. Heme chaperone required for the biogenesis of c-type cytochromes. Transiently binds heme delivered by CcmC and transfers the heme to apo-cytochromes in a process facilitated by CcmF and CcmH. This is Cytochrome c-type biogenesis protein CcmE from Parvibaculum lavamentivorans (strain DS-1 / DSM 13023 / NCIMB 13966).